A 102-amino-acid polypeptide reads, in one-letter code: Large ribosomal subunit protein uL24 (102 aa).

Belongs to the universal ribosomal protein uL24 family. Part of the 50S ribosomal subunit.

One of two assembly initiator proteins, it binds directly to the 5'-end of the 23S rRNA, where it nucleates assembly of the 50S subunit. Functionally, one of the proteins that surrounds the polypeptide exit tunnel on the outside of the subunit. The chain is Large ribosomal subunit protein uL24 from Cupriavidus metallidurans (strain ATCC 43123 / DSM 2839 / NBRC 102507 / CH34) (Ralstonia metallidurans).